Reading from the N-terminus, the 210-residue chain is UPF0173 protein PYRAB01190 (210 aa).

The protein belongs to the UPF0173 family.

In Pyrococcus abyssi (strain GE5 / Orsay), this protein is UPF0173 protein PYRAB01190.